The chain runs to 218 residues: Small ribosomal subunit protein uS3c (218 aa).

Residues 47–118 form the KH type-2 domain; that stretch reads VQKNMRIFSG…KLNIAITRIG (72 aa).

This sequence belongs to the universal ribosomal protein uS3 family. In terms of assembly, part of the 30S ribosomal subunit.

The protein localises to the plastid. It is found in the chloroplast. The sequence is that of Small ribosomal subunit protein uS3c (rps3) from Cucumis sativus (Cucumber).